Consider the following 455-residue polypeptide: MAPQLLLCLILTFLWSVPEAESNVFLKSKVANRFLQRTKRSNSLFEEIRPGNIERECIEEKCSKEEAREVFEDNEKTETFWNVYVDGDQCSSNPCHYHGTCKDGIGSYTCTCLPNYEGKNCEKVLFKSCRAFNGNCWHFCKRVQSETQCSCAESYRLGVDGHSCVAEGDFSCGRNIKARNKREASLPDFVQSQKATLLKKSDNPSPDIRIVNGMDSKLGECPWQAVLINEKGEVFCGGTILSPIHVLTAAHCINQTKSVSVIVGEIDISRKETRRLLSVDKIYVHTKFVPPNYYYGHQNFDRVAYDYDIAIIRMKTPIQFSENVVPACLPTADFANEVLMKQDSGIVSGFGRIRFKEPTSNTLKVITVPYVDRHTCMLSSDFRITQNMFCAGYDTLPQDACEGDSGGPHITAYGDTHFITGIVSWGEGCARKGKYGVYTKVSRFIPWIKKIMSLK.

Positions Met1–Ala20 are cleaved as a signal peptide. A propeptide spanning residues Glu21–Arg40 is cleaved from the precursor. A Gla domain is found at Ser41–Asp86. 4-carboxyglutamate is present on residues Glu46, Glu47, Glu54, Glu56, Glu59, Glu60, Glu65, Glu66, Glu69, Glu72, and Glu75. A disulfide bond links Cys57 and Cys62. The EGF-like 1; calcium-binding domain occupies Asp86–Cys121. Disulfide bonds link Cys90/Cys101, Cys95/Cys110, Cys112/Cys121, Cys129/Cys140, Cys136/Cys149, Cys151/Cys164, Cys172/Cys328, Cys236/Cys252, Cys376/Cys390, and Cys401/Cys429. O-linked (Hex...) serine glycosylation is present at Ser92. The EGF-like 2 domain maps to Cys129–Cys164. The propeptide at Arg182–Arg209 is activation peptide. Positions Ile210–Ser453 constitute a Peptidase S1 domain. The Charge relay system role is filled by His251. Asn254 carries N-linked (GlcNAc...) asparagine glycosylation. Residue Asp308 is the Charge relay system of the active site. Ser405 (charge relay system) is an active-site residue.

This sequence belongs to the peptidase S1 family. Snake venom subfamily. In terms of assembly, heterodimer of a light chain and a heavy chain; disulfide-linked. The vitamin K-dependent, enzymatic carboxylation of some glutamate residues allows the modified protein to bind calcium. In terms of tissue distribution, expressed by the venom gland.

It is found in the secreted. It catalyses the reaction Selective cleavage of Arg-|-Thr and then Arg-|-Ile bonds in prothrombin to form thrombin.. Its function is as follows. Snake prothrombin activator that attacks the hemostatic system of prey. This protein is functionally similar to blood coagulation factor Xa. The procoagulant activity of hopsarin-D is approximately 10-fold lower than that of trocarin-D and FXa. This is Venom prothrombin activator hopsarin-D from Hoplocephalus stephensii (Stephens's banded snake).